The primary structure comprises 203 residues: Small ribosomal subunit protein uS4 (203 aa).

The S4 RNA-binding domain occupies 93–156; the sequence is RRLDNVVYRL…MKVPAILEAV (64 aa).

It belongs to the universal ribosomal protein uS4 family. In terms of assembly, part of the 30S ribosomal subunit. Contacts protein S5. The interaction surface between S4 and S5 is involved in control of translational fidelity.

One of the primary rRNA binding proteins, it binds directly to 16S rRNA where it nucleates assembly of the body of the 30S subunit. Its function is as follows. With S5 and S12 plays an important role in translational accuracy. The polypeptide is Small ribosomal subunit protein uS4 (Streptococcus agalactiae serotype Ia (strain ATCC 27591 / A909 / CDC SS700)).